Consider the following 745-residue polypeptide: 1,4-alpha-glucan branching enzyme GlgB (745 aa).

D416 acts as the Nucleophile in catalysis. E469 (proton donor) is an active-site residue.

It belongs to the glycosyl hydrolase 13 family. GlgB subfamily. In terms of assembly, monomer.

The catalysed reaction is Transfers a segment of a (1-&gt;4)-alpha-D-glucan chain to a primary hydroxy group in a similar glucan chain.. Its pathway is glycan biosynthesis; glycogen biosynthesis. Catalyzes the formation of the alpha-1,6-glucosidic linkages in glycogen by scission of a 1,4-alpha-linked oligosaccharide from growing alpha-1,4-glucan chains and the subsequent attachment of the oligosaccharide to the alpha-1,6 position. The sequence is that of 1,4-alpha-glucan branching enzyme GlgB from Shewanella sp. (strain MR-4).